Here is a 1104-residue protein sequence, read N- to C-terminus: Ankyrin repeat- and BTB/POZ domain-containing protein 3 (1104 aa).

A helical membrane pass occupies residues 168–188; the sequence is IVLSWGLAAHCTAAALAALSL. Residues 260–301 are disordered; sequence SCSGPGSGSGSGPGPSSGPGAAPAADKEREAPGGGAASGGAC. Positions 264–276 are enriched in gly residues; that stretch reads PGSGSGSGPGPSS. 5 ANK repeats span residues 603–632, 649–678, 687–716, 730–759, and 825–854; these read QGMT…DLNV, RHWT…KVEG, YSET…DPLI, GDMN…KEKS, and TWLE…TIQE. The BTB domain occupies 923–989; the sequence is SDVTFLVEGR…LYYGGPESLL (67 aa).

It is found in the membrane. The protein is Ankyrin repeat- and BTB/POZ domain-containing protein 3 of Homo sapiens (Human).